Reading from the N-terminus, the 34-residue chain is Photosystem II reaction center protein M (34 aa).

Residues 5 to 25 (ILAFIATALFILIPTAFLLIL) form a helical membrane-spanning segment.

The protein belongs to the PsbM family. As to quaternary structure, PSII is composed of 1 copy each of membrane proteins PsbA, PsbB, PsbC, PsbD, PsbE, PsbF, PsbH, PsbI, PsbJ, PsbK, PsbL, PsbM, PsbT, PsbX, PsbY, PsbZ, Psb30/Ycf12, at least 3 peripheral proteins of the oxygen-evolving complex and a large number of cofactors. It forms dimeric complexes.

It is found in the plastid. Its subcellular location is the chloroplast thylakoid membrane. In terms of biological role, one of the components of the core complex of photosystem II (PSII). PSII is a light-driven water:plastoquinone oxidoreductase that uses light energy to abstract electrons from H(2)O, generating O(2) and a proton gradient subsequently used for ATP formation. It consists of a core antenna complex that captures photons, and an electron transfer chain that converts photonic excitation into a charge separation. This subunit is found at the monomer-monomer interface. The sequence is that of Photosystem II reaction center protein M from Angiopteris evecta (Mule's foot fern).